Reading from the N-terminus, the 1023-residue chain is PVRSITRTFASGKTEKVIFQALKELGLPSGKNDEIEPAAFTYEKFYELTQKICPRTDIEDLFKKINGDKTDYLTVDQLVSFLNEHQRDPRLNEILFPFYDAKRAMQIIEMYEPDEDLKKQGLISSDGFCRYLMSDENAPVFLDRLELYQEMDHPLAHYFISSSHNTYLTGRQFGGKSSVEMYRQVLLAGCRCVELDCWDGKGEDQEPIITHGKAMCTDILFKDVIQAIKETAFVTSEYPVILSFENHCSKYQQYKMSKYCEDLFGDLLLKQALESHPLEPGRPLPSPNDLKRKILIKKQTTETEVEKKQLEALKSMMEAGESAAPVNMLEDDNEEEIESAEQEEEAHPEYKYGNELSADDLGHKEAIANSVKKASDDLEHENSKKGLVTVEDEQAWMASYKYVGATTNIHPYLSTMINYAQPVKFQGFHVAEERNIHYNMSSFNESVGLGYLKTHAIEFVNYNKRQMSRIYPKGGRVDSSNYMPQIFWNSGCQMVSLNYQTPDLAMQLNQGKFEYNGSCGYLLKPDFMRRPDRTFDPFSETPVDGVIAATCSVQVISGQFLSDKKIGTYVEVDMYGLPTDTIRKEFRTRMVMNNGLNPVYNEESFVFRKVILPDLAVLRIAVYDDNNKLIGQRILPLDGLQAGYRHISLRNEGNKPLSLPTIFCNIVLKTYVPDGFGDIVDALSDPKKFLSITEKRADQMRAMGIETSDIADVPSDTSKNDKKGKANTAKANVTPQSSSELRPTTTAALGAGLEAKKGIELIPQVRIEDLKQMKAYLKHLKKQQKELSSLKKKHAKEHSTMQKLHCTQVDKIVAQYDKEKLTHEKILEKAMKKKGGSNCLEMKKETEIKIQTLTSDHKSKVKEIVAQHTKEWSDMINTHSAEEQEIRDLLLSQQCELLRKLLISAHEQQTQQLKLSHDRESKEMRAHQAKISMENSKAISQDKSIKNKAERERRVRELNSSNTKKFLEERKRLAMKQSKEMDQLKKVQLEHLEFVEKQNEQAKEMQQMVKLEAEMDRRPATVV.

The region spanning 149–299 (QEMDHPLAHY…LKRKILIKKQ (151 aa)) is the PI-PLC X-box domain. Catalysis depends on residues H164 and H211. In terms of domain architecture, PI-PLC Y-box spans 413–529 (LSTMINYAQP…GYLLKPDFMR (117 aa)). The 126-residue stretch at 532-657 (DRTFDPFSET…SLRNEGNKPL (126 aa)) folds into the C2 domain. Disordered stretches follow at residues 711–742 (ADVP…SELR) and 930–958 (KISM…VREL). Polar residues-rich tracts occupy residues 729–742 (AKAN…SELR) and 933–942 (MENSKAISQD). Position 734 is a phosphothreonine (T734). Over residues 943–957 (KSIKNKAERERRVRE) the composition is skewed to basic and acidic residues.

Ca(2+) serves as cofactor. The N-terminus is blocked. As to expression, preferentially expressed in the retina.

The protein resides in the cell membrane. It carries out the reaction a 1,2-diacyl-sn-glycero-3-phospho-(1D-myo-inositol-4,5-bisphosphate) + H2O = 1D-myo-inositol 1,4,5-trisphosphate + a 1,2-diacyl-sn-glycerol + H(+). The catalysed reaction is a 1,2-diacyl-sn-glycero-3-phospho-(1D-myo-inositol) + H2O = 1D-myo-inositol 1-phosphate + a 1,2-diacyl-sn-glycerol + H(+). Activated phosphatidylinositol-specific phospholipase C enzymes catalyze the production of the second messenger molecules diacylglycerol (DAG) and inositol 1,4,5-trisphosphate (IP3) involved in G-protein coupled receptor signaling pathways. PLCB4 is a direct effector of the endothelin receptor signaling pathway that plays an essential role in lower jaw and middle ear structures development. The chain is 1-phosphatidylinositol 4,5-bisphosphate phosphodiesterase beta-4 (PLCB4) from Bos taurus (Bovine).